Here is a 143-residue protein sequence, read N- to C-terminus: Transcriptional regulator SlyA (143 aa).

Residues 2–135 (ESTLGSDLAR…LSGLIDKLEK (134 aa)) form the HTH marR-type domain. A DNA-binding region (H-T-H motif) is located at residues 49-72 (QIQLAKAIGIEQPSLVRTLDQLEE).

Belongs to the SlyA family. In terms of assembly, homodimer.

Its function is as follows. Transcription regulator that can specifically activate or repress expression of target genes. The polypeptide is Transcriptional regulator SlyA (Yersinia pestis (strain Pestoides F)).